The primary structure comprises 244 residues: MSGHSKWSTIKRKKGALDAKRNKIFTKLIREISIAAKMGGGDIESNSRLRLAVNKARVSNMPKDNIEKAIKKGSGDDNIGSEYFELTYEAYAPHGVALIIKCLTDNKNRTASEVRSVLSKSGGSLGAPGSVSYMFHKKGLISYSLDKYPEDEIIELALEAGAEDIYSEGSQIEVITSAENFEAISSFLRTKFEEDIAEIALIPGNKLSLNKEQMDKVLALIEKLEDFDDVQEVVHNLEIIDEIN.

Belongs to the TACO1 family.

It is found in the cytoplasm. The sequence is that of Probable transcriptional regulatory protein BT0025 from Borrelia turicatae (strain 91E135).